The following is a 132-amino-acid chain: Translation initiation factor 5A (132 aa).

Lysine 36 carries the post-translational modification Hypusine.

This sequence belongs to the eIF-5A family.

It is found in the cytoplasm. In terms of biological role, functions by promoting the formation of the first peptide bond. The protein is Translation initiation factor 5A (eIF5A) of Pyrobaculum arsenaticum (strain DSM 13514 / JCM 11321 / PZ6).